A 235-amino-acid chain; its full sequence is 2-C-methyl-D-erythritol 4-phosphate cytidylyltransferase (235 aa).

This sequence belongs to the IspD/TarI cytidylyltransferase family. IspD subfamily.

The enzyme catalyses 2-C-methyl-D-erythritol 4-phosphate + CTP + H(+) = 4-CDP-2-C-methyl-D-erythritol + diphosphate. It functions in the pathway isoprenoid biosynthesis; isopentenyl diphosphate biosynthesis via DXP pathway; isopentenyl diphosphate from 1-deoxy-D-xylulose 5-phosphate: step 2/6. In terms of biological role, catalyzes the formation of 4-diphosphocytidyl-2-C-methyl-D-erythritol from CTP and 2-C-methyl-D-erythritol 4-phosphate (MEP). This is 2-C-methyl-D-erythritol 4-phosphate cytidylyltransferase from Pseudomonas fluorescens (strain ATCC BAA-477 / NRRL B-23932 / Pf-5).